Reading from the N-terminus, the 623-residue chain is Transketolase (623 aa).

Met1 bears the N-acetylmethionine mark. An N6-acetyllysine mark is found at Lys6 and Lys11. Substrate is bound at residue His37. Thiamine diphosphate is bound by residues Ser40 and His77. Ser104 is subject to Phosphoserine. Position 123-125 (123-125 (GSL)) interacts with thiamine diphosphate. An N6-acetyllysine modification is found at Lys144. Asp155 contacts Mg(2+). 2 residues coordinate thiamine diphosphate: Gly156 and Asn185. Positions 185 and 187 each coordinate Mg(2+). An N6-acetyllysine mark is found at Lys204, Lys232, and Lys241. Thiamine diphosphate-binding residues include Lys244 and His258. Position 258 (His258) interacts with substrate. Position 260 is an N6-acetyllysine (Lys260). Phosphotyrosine is present on Tyr275. Thr287 is modified (phosphothreonine). Ser295 is subject to Phosphoserine. Substrate is bound by residues Arg318 and Ser345. Residue Ser345 is modified to Phosphoserine. Lys352 is covalently cross-linked (Glycyl lysine isopeptide (Lys-Gly) (interchain with G-Cter in SUMO2)). Glu366 functions as the Proton donor in the catalytic mechanism. Phe392 contacts thiamine diphosphate. 2 residues coordinate substrate: His416 and Asp424. Position 428 (Gln428) interacts with thiamine diphosphate. Substrate is bound at residue Arg474. An N6-acetyllysine mark is found at Lys538 and Lys603.

This sequence belongs to the transketolase family. Homodimer. Requires Mg(2+) as cofactor. It depends on Ca(2+) as a cofactor. The cofactor is Mn(2+). Co(2+) is required as a cofactor. Thiamine diphosphate serves as cofactor.

The catalysed reaction is D-sedoheptulose 7-phosphate + D-glyceraldehyde 3-phosphate = aldehydo-D-ribose 5-phosphate + D-xylulose 5-phosphate. In terms of biological role, catalyzes the transfer of a two-carbon ketol group from a ketose donor to an aldose acceptor, via a covalent intermediate with the cofactor thiamine pyrophosphate. The chain is Transketolase (Tkt) from Mus musculus (Mouse).